The following is a 376-amino-acid chain: Chaperone protein DnaJ 2 (376 aa).

The region spanning 8–72 (DYYEILGVPR…EKRKLYDMYG (65 aa)) is the J domain. The segment at 143-219 (GTTVPIEVER…CTGRGYGLVK (77 aa)) adopts a CR-type zinc-finger fold. The Zn(2+) site is built by C156, C159, C172, C175, C194, C197, C207, and C210. CXXCXGXG motif repeat units lie at residues 156–163 (CSACGGTG), 172–179 (CPTCGGRG), 194–201 (CPTCGGEG), and 207–214 (CHACTGRG).

Belongs to the DnaJ family. In terms of assembly, homodimer. The cofactor is Zn(2+).

It is found in the cytoplasm. In terms of biological role, participates actively in the response to hyperosmotic and heat shock by preventing the aggregation of stress-denatured proteins and by disaggregating proteins, also in an autonomous, DnaK-independent fashion. Unfolded proteins bind initially to DnaJ; upon interaction with the DnaJ-bound protein, DnaK hydrolyzes its bound ATP, resulting in the formation of a stable complex. GrpE releases ADP from DnaK; ATP binding to DnaK triggers the release of the substrate protein, thus completing the reaction cycle. Several rounds of ATP-dependent interactions between DnaJ, DnaK and GrpE are required for fully efficient folding. Also involved, together with DnaK and GrpE, in the DNA replication of plasmids through activation of initiation proteins. The chain is Chaperone protein DnaJ 2 from Aquifex aeolicus (strain VF5).